The chain runs to 368 residues: Alkaline phosphatase L (368 aa).

An N-terminal signal peptide occupies residues 1–23 (MFKRSLIAASLSVAALVSAQAMA).

This sequence belongs to the PstS family. Homodimer.

Its subcellular location is the secreted. It is found in the periplasm. It catalyses the reaction a phosphate monoester + H2O = an alcohol + phosphate. In terms of biological role, has both a phosphomonoesterase and phosphodiesterase activity. This chain is Alkaline phosphatase L, found in Pseudomonas aeruginosa (strain ATCC 15692 / DSM 22644 / CIP 104116 / JCM 14847 / LMG 12228 / 1C / PRS 101 / PAO1).